Reading from the N-terminus, the 117-residue chain is MSNIIKALEEEQMKSDLPKFAPGDTVVVQVKVKEGDRERLQAFEGVVIAIRNRGLHSAFTVRKISNGEGVERTFQTHSPIVDSIEVKRRGAVRRAKLYYLRERSGKSARIKEKLAKK.

This sequence belongs to the bacterial ribosomal protein bL19 family.

Its function is as follows. This protein is located at the 30S-50S ribosomal subunit interface and may play a role in the structure and function of the aminoacyl-tRNA binding site. The polypeptide is Large ribosomal subunit protein bL19 (Vibrio campbellii (strain ATCC BAA-1116)).